A 275-amino-acid polypeptide reads, in one-letter code: Epidermal growth factor-like protein 7 (275 aa).

An N-terminal signal peptide occupies residues 1–21; sequence MWGSGELLVAWFLVLAADGTT. In terms of domain architecture, EMI spans 28–105; the sequence is SRRVCTVGIS…TSGLPGACGA (78 aa). 8 cysteine pairs are disulfide-bonded: Cys32–Cys90, Cys57–Cys63, Cys89–Cys103, Cys108–Cys118, Cys112–Cys124, Cys126–Cys135, Cys142–Cys153, and Cys149–Cys162. Residues 104–136 form the EGF-like 1 domain; it reads GAAICQPPCGNGGSCIRPGHCRCPVGWQGDTCQ. Residues 131-133 carry the Cell attachment site motif; it reads QGD. Residues 138-178 enclose the EGF-like 2; calcium-binding domain; it reads DVDECSTGEASCPQRCVNTVGSYWCQGWEGQSPSADGTRCL. The segment at 173–193 is disordered; sequence DGTRCLSKEGPSPVAPNPTAG. Positions 196 to 220 form a coiled coil; it reads SMAREEVYRLQARVDVLEQKLQLVL.

In terms of assembly, interacts with ITGAV/ITGB3 in an RGD-dependent manner, increasing endothelial cell's motility. Expressed specifically by endothelial cells of the highly vascularized organs heart, lung and kidney.

The protein resides in the secreted. It localises to the extracellular space. Its function is as follows. Regulates vascular tubulogenesis in vivo. Inhibits platelet-derived growth factor (PDGF)-BB-induced smooth muscle cell migration and promotes endothelial cell adhesion to the extracellular matrix and angiogenesis. The polypeptide is Epidermal growth factor-like protein 7 (Egfl7) (Mus musculus (Mouse)).